Reading from the N-terminus, the 239-residue chain is Tetraspanin-9 (239 aa).

A run of 3 helical transmembrane segments spans residues Phe-14–Leu-34, Leu-56–Ile-76, and Phe-86–Val-106. Asn-180 and Asn-181 each carry an N-linked (GlcNAc...) asparagine glycan. Residues Val-204–Met-224 form a helical membrane-spanning segment.

It belongs to the tetraspanin (TM4SF) family. In terms of assembly, found in a complex with GP6. Glycosylated.

It is found in the membrane. The chain is Tetraspanin-9 (TSPAN9) from Ovis aries (Sheep).